A 261-amino-acid chain; its full sequence is Calbindin (261 aa).

Ala-2 is modified (N-acetylalanine). Residues 2-7 (AESHLQ) form an interaction with RANBP9 region. EF-hand domains follow at residues 11-46 (ITAS…LLQA), 53-88 (ELSP…EENF), 98-133 (KSCE…LLEK), 142-177 (KLAE…QENF), and 186-221 (MCGK…LCEK). Asp-24, Asp-26, Ser-28, Tyr-30, and Glu-35 together coordinate Ca(2+). Ca(2+)-binding residues include Asp-111, Asp-113, Ser-115, Glu-122, Asp-155, Asn-157, Asp-159, Lys-161, Glu-166, Asp-199, Asp-201, Asn-203, Tyr-205, and Glu-210.

The protein belongs to the calbindin family. In terms of assembly, interacts with RANBP9.

Buffers cytosolic calcium. May stimulate a membrane Ca(2+)-ATPase and a 3',5'-cyclic nucleotide phosphodiesterase. The chain is Calbindin (Calb1) from Rattus norvegicus (Rat).